The sequence spans 470 residues: 6-phospho-beta-galactosidase (470 aa).

Gln19, His116, Asn159, Glu160, and Asn297 together coordinate D-galactose 6-phosphate. The Proton donor role is filled by Glu160. Catalysis depends on Glu375, which acts as the Nucleophile. D-galactose 6-phosphate contacts are provided by Ser430, Trp431, Lys437, and Tyr439.

Belongs to the glycosyl hydrolase 1 family.

It catalyses the reaction a 6-phospho-beta-D-galactoside + H2O = D-galactose 6-phosphate + an alcohol. It functions in the pathway carbohydrate metabolism; lactose degradation; D-galactose 6-phosphate and beta-D-glucose from lactose 6-phosphate: step 1/1. The sequence is that of 6-phospho-beta-galactosidase from Staphylococcus aureus (strain Mu3 / ATCC 700698).